The following is a 448-amino-acid chain: NADP-specific glutamate dehydrogenase (448 aa).

3 residues coordinate substrate: lysine 88, glutamine 109, and lysine 112. Residue lysine 124 is the Proton donor of the active site. Glycine 163 provides a ligand contact to substrate. Residues threonine 207 and asparagine 238 each coordinate NADP(+). Serine 381 is a substrate binding site.

This sequence belongs to the Glu/Leu/Phe/Val dehydrogenases family. Homohexamer.

The catalysed reaction is L-glutamate + NADP(+) + H2O = 2-oxoglutarate + NH4(+) + NADPH + H(+). Catalyzes the reversible oxidative deamination of glutamate to alpha-ketoglutarate and ammonia. The protein is NADP-specific glutamate dehydrogenase (gdhA) of Helicobacter pylori (strain J99 / ATCC 700824) (Campylobacter pylori J99).